Reading from the N-terminus, the 337-residue chain is Retrovirus-related Pol polyprotein from type-1 retrotransposable element R1 (337 aa).

The 118-residue stretch at 1-118 folds into the Reverse transcriptase domain; sequence GCPQGSISGP…KSARYLGVCM (118 aa). A nucleic acid-binding endonuclease region spans residues 253–337; it reads KRARSCKLMK…ACPCGAPRED (85 aa).

It catalyses the reaction DNA(n) + a 2'-deoxyribonucleoside 5'-triphosphate = DNA(n+1) + diphosphate. In Nasonia vitripennis (Parasitic wasp), this protein is Retrovirus-related Pol polyprotein from type-1 retrotransposable element R1.